Reading from the N-terminus, the 411-residue chain is Inhibin beta B chain (411 aa).

The signal sequence occupies residues 1-28 (MDGLPGRALGAACLLLLAAGWLGPEAWG). The tract at residues 27–69 (WGSPTPPPSPAAPPPPPPPGAPGGSQDTCTSCGGGGGGFRRPE) is disordered. A propeptide spanning residues 29 to 296 (SPTPPPSPAA…GDSRHRIRKR (268 aa)) is cleaved from the precursor. Positions 30–47 (PTPPPSPAAPPPPPPPGA) are enriched in pro residues. N97 is a glycosylation site (N-linked (GlcNAc...) asparagine). 4 disulfide bridges follow: C300–C308, C307–C376, C336–C408, and C340–C410.

This sequence belongs to the TGF-beta family. In terms of assembly, dimeric, linked by one or more disulfide bonds. Inhibin B is a dimer of alpha and beta-B. Activin B is a homodimer of beta-B. Activin AB is a dimer of beta-A and beta-B. Interacts with FST and FSTL3. As to expression, alpha- and beta-B subunits are the predominant forms found in rat testis. Also expressed in ovary.

Its subcellular location is the secreted. Functionally, inhibins and activins inhibit and activate, respectively, the secretion of follitropin by the pituitary gland. Inhibins/activins are involved in regulating a number of diverse functions such as hypothalamic and pituitary hormone secretion, gonadal hormone secretion, germ cell development and maturation, erythroid differentiation, insulin secretion, nerve cell survival, embryonic axial development or bone growth, depending on their subunit composition. Inhibins appear to oppose the functions of activins. Activin B is a dimer of alpha and beta-B that plays a role in several essential biological processes including embryonic development, stem cell maintenance and differentiation, haematopoiesis, cell proliferation and wound healing. Signals through type I receptor ACVR1C, abundantly expressed in pancreatic beta cells, and type II receptors like ACVR2A. Upon ligand binding, these receptors phosphorylate intracellular signaling mediators SMAD2 and SMAD3, which form a complex with SMAD4, translocate to the nucleus, and regulate gene expression. Plays a crucial role in the induction of hepcidin by inflammation through activation of ACVR1C and subsequent phosphorylation of SMAD1/5/8. Regulates adipocyte lipid metabolism by decreasing non-esterified fatty acids and glycerol release and increases intracellular triglyceride content. Stimulates wound healing by promoting cell migration and hair follicle regeneration through the JNK and ERK signaling pathways downstream of RHOA. Its function is as follows. Inhibin B is a dimer of alpha and beta-B that plays a crucial role in the regulation of the reproductive system by inhibiting the secretion of follicle-stimulating hormone (FSH) from the anterior pituitary gland. Thereby, maintains reproductive homeostasis in both males and females. Acts as a more potent suppressor of FSH release than inhibin A. Functions as competitive receptor antagonist binding activin type II receptors with high affinity in the presence of the TGF-beta type III coreceptor/TGFBR3L. This is Inhibin beta B chain (Inhbb) from Rattus norvegicus (Rat).